Here is a 2763-residue protein sequence, read N- to C-terminus: Large tegument protein deneddylase (2763 aa).

The tract at residues 1–247 is deubiquitination activity; that stretch reads MDIIPPIAVT…CDTYFTDEQY (247 aa). In terms of domain architecture, Peptidase C76 spans 12–237; sequence AGVGSRNQFD…SSAVTLIYGS (226 aa). Active-site residues include cysteine 32, aspartate 168, and histidine 170. The segment at 495–523 is interaction with inner tegument protein; that stretch reads LELFINLTILRLTGFVVENGTRTHHGATS. Residues 2456–2476 are disordered; that stretch reads VRPAQPAQPAQPAQPAQTVQP. A run of 5 repeats spans residues 2458–2460, 2461–2463, 2464–2466, 2467–2469, and 2470–2472. The segment at 2458–2472 is 5 X 3 AA repeats of P-A-Q; that stretch reads PAQPAQPAQPAQPAQ. The segment covering 2459-2476 has biased composition (low complexity); that stretch reads AQPAQPAQPAQPAQTVQP.

The protein belongs to the herpesviridae large tegument protein family. Interacts with host CUL1 and CUL4A; these interactions inhibit the E3 ligase activity of cullins. Interacts with inner tegument protein. Interacts with capsid vertex specific component CVC2. Interacts with the major capsid protein/MCP.

Its subcellular location is the virion tegument. The protein resides in the host cytoplasm. It is found in the host nucleus. The catalysed reaction is Thiol-dependent hydrolysis of ester, thioester, amide, peptide and isopeptide bonds formed by the C-terminal Gly of ubiquitin (a 76-residue protein attached to proteins as an intracellular targeting signal).. Its function is as follows. Large tegument protein that plays multiple roles in the viral cycle. During viral entry, remains associated with the capsid while most of the tegument is detached and participates in the capsid transport toward the host nucleus. Plays a role in the routing of the capsid at the nuclear pore complex and subsequent uncoating. Within the host nucleus, acts as a deneddylase and promotes the degradation of nuclear CRLs (cullin-RING ubiquitin ligases) and thereby stabilizes nuclear CRL substrates, while cytoplasmic CRLs remain unaffected. These modifications prevent host cell cycle S-phase progression and create a favorable environment allowing efficient viral genome replication. Participates later in the secondary envelopment of capsids. Indeed, plays a linker role for the association of the outer viral tegument to the capsids together with the inner tegument protein. In Homo sapiens (Human), this protein is Large tegument protein deneddylase.